We begin with the raw amino-acid sequence, 85 residues long: Large ribosomal subunit protein bL27 (85 aa).

It belongs to the bacterial ribosomal protein bL27 family.

This is Large ribosomal subunit protein bL27 from Campylobacter fetus subsp. fetus (strain 82-40).